The primary structure comprises 365 residues: Ribosomal RNA large subunit methyltransferase M (365 aa).

S-adenosyl-L-methionine-binding positions include Ser-188, 221 to 224 (CPGG), Asp-240, Asp-260, and Asp-277. Lys-306 (proton acceptor) is an active-site residue.

Belongs to the class I-like SAM-binding methyltransferase superfamily. RNA methyltransferase RlmE family. RlmM subfamily. As to quaternary structure, monomer.

Its subcellular location is the cytoplasm. It catalyses the reaction cytidine(2498) in 23S rRNA + S-adenosyl-L-methionine = 2'-O-methylcytidine(2498) in 23S rRNA + S-adenosyl-L-homocysteine + H(+). In terms of biological role, catalyzes the 2'-O-methylation at nucleotide C2498 in 23S rRNA. The chain is Ribosomal RNA large subunit methyltransferase M from Proteus mirabilis (strain HI4320).